Reading from the N-terminus, the 429-residue chain is Enolase (429 aa).

Gln162 contributes to the (2R)-2-phosphoglycerate binding site. Catalysis depends on Glu204, which acts as the Proton donor. Mg(2+) is bound by residues Asp241, Glu282, and Asp309. Residues Lys334, Arg363, Ser364, and Lys385 each contribute to the (2R)-2-phosphoglycerate site. The active-site Proton acceptor is Lys334.

The protein belongs to the enolase family. Mg(2+) is required as a cofactor.

The protein localises to the cytoplasm. It localises to the secreted. It is found in the cell surface. The enzyme catalyses (2R)-2-phosphoglycerate = phosphoenolpyruvate + H2O. It functions in the pathway carbohydrate degradation; glycolysis; pyruvate from D-glyceraldehyde 3-phosphate: step 4/5. Catalyzes the reversible conversion of 2-phosphoglycerate (2-PG) into phosphoenolpyruvate (PEP). It is essential for the degradation of carbohydrates via glycolysis. This Acidothermus cellulolyticus (strain ATCC 43068 / DSM 8971 / 11B) protein is Enolase.